An 847-amino-acid chain; its full sequence is B-cell receptor CD22 (847 aa).

A signal peptide spans 1 to 19 (MHLLGPWLLLLVLEYLAFS). One can recognise an Ig-like V-type domain in the interval 20-138 (DSSKWAFEHP…MERIHLNVSE (119 aa)). The Extracellular portion of the chain corresponds to 20–687 (DSSKWAFEHP…YYSPETIGRR (668 aa)). Asparagine 67, asparagine 101, and asparagine 112 each carry an N-linked (GlcNAc...) asparagine glycan. Position 120 (arginine 120) interacts with N-acetylneuraminate. Asparagine 135, asparagine 164, and asparagine 231 each carry an N-linked (GlcNAc...) asparagine glycan. Ig-like C2-type domains follow at residues 143 to 235 (PHIQ…DTVQ), 242 to 326 (PKLE…VFLQ), 331 to 416 (PEPS…LDVQ), 419 to 500 (PKKV…VALN), 505 to 582 (PRDV…QTAS), and 593 to 676 (PRRL…STLT). A disulfide bridge links cysteine 161 with cysteine 219. Intrachain disulfides connect cysteine 265-cysteine 309 and cysteine 353-cysteine 396. N-linked (GlcNAc...) asparagine glycans are attached at residues asparagine 363, asparagine 428, asparagine 445, asparagine 448, and asparagine 479. Intrachain disulfides connect cysteine 442/cysteine 484 and cysteine 529/cysteine 571. Residues asparagine 574 and asparagine 634 are each glycosylated (N-linked (GlcNAc...) asparagine). Cysteine 616 and cysteine 659 form a disulfide bridge. Residues 688 to 708 (VAVGFGSCLAILILAICGLKL) form a helical membrane-spanning segment. The Cytoplasmic portion of the chain corresponds to 709–847 (QRRWKRTQSQ…ENVDYVILKH (139 aa)). Serine 725, serine 726, and serine 729 each carry phosphoserine. 2 consecutive short sequence motifs (ITIM motif) follow at residues 760 to 765 (ISYTTL) and 794 to 799 (VTYSVL). Tyrosine 762 is modified (phosphotyrosine). Residues tyrosine 807, tyrosine 822, and tyrosine 842 each carry the phosphotyrosine modification. Short sequence motifs (ITIM motif) lie at residues 820–825 (IHYSEL) and 840–845 (VDYVIL).

Belongs to the immunoglobulin superfamily. SIGLEC (sialic acid binding Ig-like lectin) family. In terms of assembly, predominantly monomer of isoform CD22-beta. Also found as heterodimer of isoform CD22-beta and a shorter isoform. Interacts with PTPN6/SHP-1, LYN, SYK, PIK3R1/PIK3R2 and PLCG1 upon phosphorylation. Interacts with GRB2, INPP5D and SHC1 upon phosphorylation. May form a complex with INPP5D/SHIP, GRB2 and SHC1. Phosphorylation of Tyr-762, Tyr-807 and Tyr-822 are involved in binding to SYK, GRB2 and SYK, respectively. Phosphorylation of Tyr-842 is involved in binding to SYK, PLCG2 and PIK3R1/PIK3R2. Post-translationally, phosphorylated on tyrosine residues by LYN.

The protein localises to the cell membrane. Functionally, most highly expressed siglec (sialic acid-binding immunoglobulin-like lectin) on B-cells that plays a role in various aspects of B-cell biology including differentiation, antigen presentation, and trafficking to bone marrow. Binds to alpha 2,6-linked sialic acid residues of surface molecules such as CD22 itself, CD45 and IgM in a cis configuration. Can also bind to ligands on other cells as an adhesion molecule in a trans configuration. Acts as an inhibitory coreceptor on the surface of B-cells and inhibits B-cell receptor induced signaling, characterized by inhibition of the calcium mobilization and cellular activation. Mechanistically, the immunoreceptor tyrosine-based inhibitory motif domain is phosphorylated by the Src kinase LYN, which in turn leads to the recruitment of the protein tyrosine phosphatase 1/PTPN6, leading to the negative regulation of BCR signaling. If this negative signaling from is of sufficient strength, apoptosis of the B-cell can be induced. In Pan paniscus (Pygmy chimpanzee), this protein is B-cell receptor CD22.